A 215-amino-acid polypeptide reads, in one-letter code: MIKLTARQQQVFDLIRRAIERSGFPPTRAEIAAELGFSSPNAAEEHLRALARKGVIELAAGASRGIRLLGIDDAPHQLTLPHAALMQLSLPLVGRVAAGSPILAQEHISQHYACDPALFSSKPDYLLKVRGLSMRDAGILDGDLLAVQKRTEAKDGQIIVARLGDDVTVKRLKRRPGGVELIAENPDYENIFVKAGSAEFALEGIAVGLIRPGEF.

The segment at residues 28–48 (RAEIAAELGFSSPNAAEEHLR) is a DNA-binding region (H-T-H motif). Residues Ser133 and Lys170 each act as for autocatalytic cleavage activity in the active site.

The protein belongs to the peptidase S24 family. As to quaternary structure, homodimer.

The enzyme catalyses Hydrolysis of Ala-|-Gly bond in repressor LexA.. Its function is as follows. Represses a number of genes involved in the response to DNA damage (SOS response), including recA and lexA. In the presence of single-stranded DNA, RecA interacts with LexA causing an autocatalytic cleavage which disrupts the DNA-binding part of LexA, leading to derepression of the SOS regulon and eventually DNA repair. This is LexA repressor from Burkholderia mallei (strain NCTC 10247).